Here is a 187-residue protein sequence, read N- to C-terminus: Large ribosomal subunit protein uL5 (187 aa).

It belongs to the universal ribosomal protein uL5 family. In terms of assembly, part of the 50S ribosomal subunit; part of the 5S rRNA/L5/L18/L25 subcomplex. Contacts the 5S rRNA and the P site tRNA. Forms a bridge to the 30S subunit in the 70S ribosome.

Functionally, this is one of the proteins that bind and probably mediate the attachment of the 5S RNA into the large ribosomal subunit, where it forms part of the central protuberance. In the 70S ribosome it contacts protein S13 of the 30S subunit (bridge B1b), connecting the 2 subunits; this bridge is implicated in subunit movement. Contacts the P site tRNA; the 5S rRNA and some of its associated proteins might help stabilize positioning of ribosome-bound tRNAs. This Saccharopolyspora erythraea (strain ATCC 11635 / DSM 40517 / JCM 4748 / NBRC 13426 / NCIMB 8594 / NRRL 2338) protein is Large ribosomal subunit protein uL5.